Consider the following 267-residue polypeptide: Hydroxyethylthiazole kinase (267 aa).

M46 serves as a coordination point for substrate. 2 residues coordinate ATP: R122 and S168. G195 serves as a coordination point for substrate.

It belongs to the Thz kinase family. Requires Mg(2+) as cofactor.

It catalyses the reaction 5-(2-hydroxyethyl)-4-methylthiazole + ATP = 4-methyl-5-(2-phosphooxyethyl)-thiazole + ADP + H(+). It functions in the pathway cofactor biosynthesis; thiamine diphosphate biosynthesis; 4-methyl-5-(2-phosphoethyl)-thiazole from 5-(2-hydroxyethyl)-4-methylthiazole: step 1/1. In terms of biological role, catalyzes the phosphorylation of the hydroxyl group of 4-methyl-5-beta-hydroxyethylthiazole (THZ). The polypeptide is Hydroxyethylthiazole kinase (Nitratidesulfovibrio vulgaris (strain DSM 19637 / Miyazaki F) (Desulfovibrio vulgaris)).